The sequence spans 284 residues: 2-dehydro-3-deoxyphosphooctonate aldolase (284 aa).

It belongs to the KdsA family.

The protein localises to the cytoplasm. It carries out the reaction D-arabinose 5-phosphate + phosphoenolpyruvate + H2O = 3-deoxy-alpha-D-manno-2-octulosonate-8-phosphate + phosphate. Its pathway is carbohydrate biosynthesis; 3-deoxy-D-manno-octulosonate biosynthesis; 3-deoxy-D-manno-octulosonate from D-ribulose 5-phosphate: step 2/3. The protein operates within bacterial outer membrane biogenesis; lipopolysaccharide biosynthesis. This Photobacterium profundum (strain SS9) protein is 2-dehydro-3-deoxyphosphooctonate aldolase.